Here is a 510-residue protein sequence, read N- to C-terminus: Ribonuclease Y (510 aa).

Residues 2 to 22 traverse the membrane as a helical segment; the sequence is IYIIFSSIFAGFILGFLVRVF. Positions 198-258 constitute a KH domain; sequence TVASVELPND…IRKELAKRTL (61 aa). Positions 324–419 constitute an HD domain; that stretch reads VLSHSKETAI…VQIADAISAS (96 aa).

Belongs to the RNase Y family.

Its subcellular location is the cell membrane. In terms of biological role, endoribonuclease that initiates mRNA decay. The polypeptide is Ribonuclease Y (Borrelia garinii subsp. bavariensis (strain ATCC BAA-2496 / DSM 23469 / PBi) (Borreliella bavariensis)).